The following is a 422-amino-acid chain: RNA exonuclease 4 (422 aa).

A disordered region spans residues methionine 1 to isoleucine 194. Serine 15 carries the phosphoserine modification. Residues leucine 26–serine 40 are compositionally biased toward basic residues. 2 positions are modified to phosphoserine: serine 96 and serine 111. 2 stretches are compositionally biased toward basic and acidic residues: residues asparagine 106–alanine 127 and glycine 151–histidine 176. Lysine 115 participates in a covalent cross-link: Glycyl lysine isopeptide (Lys-Gly) (interchain with G-Cter in SUMO2). The Exonuclease domain occupies alanine 243–tyrosine 394.

Belongs to the REXO4 family. Can bind ESR1 and ESR2. This interaction is abrogated by estrogen and augmented by tamoxifen treatment.

It localises to the nucleus. It is found in the nucleolus. The sequence is that of RNA exonuclease 4 (REXO4) from Homo sapiens (Human).